A 197-amino-acid chain; its full sequence is uncharacterized protein (197 aa).

Over residues 1–10 (MKNNYTSLKS) the composition is skewed to polar residues. 2 disordered regions span residues 1-46 (MKNN…PPYS) and 54-73 (LVPE…NVER). A compositionally biased stretch (basic and acidic residues) spans 18-37 (LKTGHEIDLEKGPLPEHNSE). A compositionally biased stretch (polar residues) spans 58-69 (DSSTGPTETANP). 2 helical membrane passes run 83–105 (NIYS…FTAW) and 120–142 (AFFV…EPGL).

The protein belongs to the WTF family.

The protein resides in the endoplasmic reticulum membrane. This is an uncharacterized protein from Schizosaccharomyces pombe (strain 972 / ATCC 24843) (Fission yeast).